The following is a 133-amino-acid chain: Phosphoribosyl-AMP cyclohydrolase (133 aa).

Position 77 (D77) interacts with Mg(2+). C78 lines the Zn(2+) pocket. Mg(2+) is bound by residues D79 and D81. Zn(2+)-binding residues include C95 and C102.

Belongs to the PRA-CH family. Homodimer. Requires Mg(2+) as cofactor. Zn(2+) serves as cofactor.

It localises to the cytoplasm. It catalyses the reaction 1-(5-phospho-beta-D-ribosyl)-5'-AMP + H2O = 1-(5-phospho-beta-D-ribosyl)-5-[(5-phospho-beta-D-ribosylamino)methylideneamino]imidazole-4-carboxamide. It participates in amino-acid biosynthesis; L-histidine biosynthesis; L-histidine from 5-phospho-alpha-D-ribose 1-diphosphate: step 3/9. In terms of biological role, catalyzes the hydrolysis of the adenine ring of phosphoribosyl-AMP. The protein is Phosphoribosyl-AMP cyclohydrolase of Azotobacter vinelandii (strain DJ / ATCC BAA-1303).